The chain runs to 209 residues: Abscisic acid receptor PYL3 (209 aa).

A disordered region spans residues 1 to 23 (MNLAPIHDPSSSSTTTTSSSTPY). Positions 10–21 (SSSSTTTTSSST) are enriched in low complexity. An START-like region spans residues 43-205 (FPRSPNTCTS…NLQNLAVIST (163 aa)). Residues lysine 79, 113–118 (ASTSVE), 140–146 (RLNNYRS), and glutamate 170 each bind abscisate. A Gate loop motif is present at residues 109 to 113 (SGLPA). A Latch loop motif is present at residues 139–141 (HRL).

The protein belongs to the PYR/PYL/RCAR abscisic acid intracellular receptor family. Homodimer and monomer. Binds ABA on one subunit only. ABA-binding favors monomer and trans-homodimer intermediate, and increases PP2C inhibitor activity. Binds both (-)-ABA and (+)-ABA. Binds to CARs protein in an ABA-independent manner, both at the plasma membrane and in the nucleus. Interacts with HAB1, ABI1 and ABI2, and possibly with other PP2Cs.

It localises to the cytoplasm. It is found in the nucleus. The protein resides in the cell membrane. Functionally, receptor for abscisic acid (ABA) required for ABA-mediated responses such as stomatal closure and germination inhibition. Inhibits the activity of group-A protein phosphatases type 2C (PP2Cs) when activated by ABA. Can be activated by both (-)-ABA and (+)-ABA. In Arabidopsis thaliana (Mouse-ear cress), this protein is Abscisic acid receptor PYL3 (PYL3).